The sequence spans 298 residues: N-acetylmuramic acid 6-phosphate etherase (298 aa).

The SIS domain occupies 55–218 (IHTQVSGGGR…STGLMIKSGK (164 aa)). Residue Glu83 is the Proton donor of the active site. The active site involves Glu114.

The protein belongs to the GCKR-like family. MurNAc-6-P etherase subfamily. As to quaternary structure, homodimer.

It catalyses the reaction N-acetyl-D-muramate 6-phosphate + H2O = N-acetyl-D-glucosamine 6-phosphate + (R)-lactate. It functions in the pathway amino-sugar metabolism; 1,6-anhydro-N-acetylmuramate degradation. It participates in amino-sugar metabolism; N-acetylmuramate degradation. The protein operates within cell wall biogenesis; peptidoglycan recycling. Functionally, specifically catalyzes the cleavage of the D-lactyl ether substituent of MurNAc 6-phosphate, producing GlcNAc 6-phosphate and D-lactate. Together with AnmK, is also required for the utilization of anhydro-N-acetylmuramic acid (anhMurNAc) either imported from the medium or derived from its own cell wall murein, and thus plays a role in cell wall recycling. This Escherichia coli O6:K15:H31 (strain 536 / UPEC) protein is N-acetylmuramic acid 6-phosphate etherase.